The primary structure comprises 59 residues: Inner kinetochore subunit fta6 (59 aa).

In terms of assembly, component of the inner kinetochore constitutive centromere-associated network (CCAN) (also known as central kinetochore Sim4 complex in fission yeast), which is composed of at least cnl2, cnp3, cnp20, fta1, fta2, fta3, fta4, fta6, fta7, mal2, mhf1, mhf2, mis6, mis15, mis17, sim4 and wip1.

It is found in the nucleus. Its subcellular location is the chromosome. The protein localises to the centromere. It localises to the kinetochore. The protein resides in the cytoplasm. It is found in the cytoskeleton. Its subcellular location is the microtubule organizing center. The protein localises to the spindle pole body. Its function is as follows. Component of the kinetochore, a multiprotein complex that assembles on centromeric DNA and attaches chromosomes to spindle microtubules, mediating chromosome segregation and sister chromatid segregation during meiosis and mitosis. Component of the inner kinetochore constitutive centromere-associated network (CCAN), which serves as a structural platform for outer kinetochore assembly. The polypeptide is Inner kinetochore subunit fta6 (fta6) (Schizosaccharomyces pombe (strain 972 / ATCC 24843) (Fission yeast)).